Reading from the N-terminus, the 119-residue chain is Large ribosomal subunit protein bL20 (119 aa).

The protein belongs to the bacterial ribosomal protein bL20 family.

Its function is as follows. Binds directly to 23S ribosomal RNA and is necessary for the in vitro assembly process of the 50S ribosomal subunit. It is not involved in the protein synthesizing functions of that subunit. In Clostridium perfringens (strain ATCC 13124 / DSM 756 / JCM 1290 / NCIMB 6125 / NCTC 8237 / Type A), this protein is Large ribosomal subunit protein bL20.